We begin with the raw amino-acid sequence, 212 residues long: Kynurenine formamidase (212 aa).

Trp17 is a binding site for substrate. Zn(2+) contacts are provided by His48, His52, and Asp54. Catalysis depends on His58, which acts as the Proton donor/acceptor. Zn(2+)-binding residues include His161 and Glu173.

This sequence belongs to the Cyclase 1 superfamily. KynB family. As to quaternary structure, homodimer. Zn(2+) is required as a cofactor.

The enzyme catalyses N-formyl-L-kynurenine + H2O = L-kynurenine + formate + H(+). It functions in the pathway amino-acid degradation; L-tryptophan degradation via kynurenine pathway; L-kynurenine from L-tryptophan: step 2/2. In terms of biological role, catalyzes the hydrolysis of N-formyl-L-kynurenine to L-kynurenine, the second step in the kynurenine pathway of tryptophan degradation. The sequence is that of Kynurenine formamidase from Salinibacter ruber (strain DSM 13855 / M31).